A 360-amino-acid chain; its full sequence is Phenylalanine--tRNA ligase alpha subunit (360 aa).

Glutamate 260 provides a ligand contact to Mg(2+).

The protein belongs to the class-II aminoacyl-tRNA synthetase family. Phe-tRNA synthetase alpha subunit type 1 subfamily. Tetramer of two alpha and two beta subunits. Mg(2+) is required as a cofactor.

Its subcellular location is the cytoplasm. The enzyme catalyses tRNA(Phe) + L-phenylalanine + ATP = L-phenylalanyl-tRNA(Phe) + AMP + diphosphate + H(+). This chain is Phenylalanine--tRNA ligase alpha subunit, found in Sinorhizobium medicae (strain WSM419) (Ensifer medicae).